A 430-amino-acid polypeptide reads, in one-letter code: Agropine synthesis reductase (430 aa).

203–227 contributes to the NAD(+) binding site; it reads LISGPSRGIGKAIAENLIAHGYRMS. Residue S333 participates in substrate binding. Y346 serves as the catalytic Proton acceptor.

It belongs to the short-chain dehydrogenases/reductases (SDR) family.

It functions in the pathway opine metabolism; mannopine biosynthesis. Functionally, reduces deoxy-fructosyl-glutamine to mannopine. The sequence is that of Agropine synthesis reductase (mas1) from Rhizobium rhizogenes (Agrobacterium rhizogenes).